Reading from the N-terminus, the 233-residue chain is UPF0502 protein YPTS_2082 (233 aa).

It belongs to the UPF0502 family.

In Yersinia pseudotuberculosis serotype IB (strain PB1/+), this protein is UPF0502 protein YPTS_2082.